Consider the following 47-residue polypeptide: GVPCLCDSDGPSVHGNTLSGTIWLAGCPSGWHNCKAHGPTIGWCCKK.

Cystine bridges form between Cys-4-Cys-44, Cys-6-Cys-34, and Cys-27-Cys-45.

It belongs to the sea anemone sodium channel inhibitory toxin family. Type I subfamily.

The protein localises to the secreted. The protein resides in the nematocyst. Binds specifically to voltage-gated sodium channels (Nav), thereby delaying their inactivation during signal transduction. Has a longer mammalian heart stimulation effect than Hk2a, Hk8a and Hk16a. The sequence is that of Delta-actitoxin-Aspp1b from Anthopleura sp. (strain 'Zhanjiang') (Sea anemone).